Reading from the N-terminus, the 416-residue chain is Tyrosine--tRNA ligase (416 aa).

Tyrosine 34 is an L-tyrosine binding site. The 'HIGH' region signature appears at 39–48 (PTGDSLHIGH). L-tyrosine is bound by residues tyrosine 165 and glutamine 169. A 'KMSKS' region motif is present at residues 227–231 (KFGKT). Residue lysine 230 participates in ATP binding. Residues 349-416 (ENIIIWLTDN…KKHYYLARVK (68 aa)) form the S4 RNA-binding domain.

The protein belongs to the class-I aminoacyl-tRNA synthetase family. TyrS type 1 subfamily. In terms of assembly, homodimer.

The protein localises to the cytoplasm. It carries out the reaction tRNA(Tyr) + L-tyrosine + ATP = L-tyrosyl-tRNA(Tyr) + AMP + diphosphate + H(+). Its function is as follows. Catalyzes the attachment of tyrosine to tRNA(Tyr) in a two-step reaction: tyrosine is first activated by ATP to form Tyr-AMP and then transferred to the acceptor end of tRNA(Tyr). This Limosilactobacillus reuteri (strain DSM 20016) (Lactobacillus reuteri) protein is Tyrosine--tRNA ligase.